We begin with the raw amino-acid sequence, 122 residues long: Toxin CSTX-1 (122 aa).

The N-terminal stretch at 1–20 is a signal peptide; sequence MKVLIISAVLFITIFSNISA. A propeptide spanning residues 21–47 is cleaved from the precursor; sequence EIEDDFLEDESFEAEDIIPFFENEQAR. 4 disulfides stabilise this stretch: cysteine 49-cysteine 64, cysteine 56-cysteine 73, cysteine 63-cysteine 91, and cysteine 75-cysteine 89. Positions 99–112 are predicted alpha-helix; the sequence is AIETGLNIFRGLFK. Arginine 108 bears the Arginine amide; in CSTX-2a mark. Lysine 121 is subject to Lysine amide; in omega-ctenitoxin-Cs1a.

The protein belongs to the neurotoxin 19 (CSTX) family. 04 (U1-Lctx) subfamily. As to quaternary structure, monomer. Interacts with CSTX-13 (AC P83919) (Kd=430 nM), but does not interact with CSTX-9 (AC P58604). In terms of tissue distribution, expressed by the venom gland.

Its subcellular location is the secreted. It is found in the target cell membrane. Its function is as follows. Spider venom toxin that shows calcium channel blocking activity and exhibits cytolytic activity by affecting the outer leaflet curvature and/or pore formation across the membrane. It blocks L-type calcium channels (Cav1/CACNA1) in mammalian neurons at nanomolar concentrations. Furthermore, it produces a slow voltage-independent block of mid/low and high voltage-activated calcium channels in cockroach neurons. Potassium ions, histamine, M-ctenitoxin-Cs1a (AC P83619), CSTX-9 (AC P58604), and CSTX-13 (AC P83919) synergistically increase the insecticidal activity of this toxin. In vivo, it causes paralysis in blow flies and provokes death in drosophila. Blocks voltage-activated calcium channels (Cav). Does not induce cell membrane permeability increase when tested on Xenopus oocytes. No alpha-helical structures are detectable. Is 7-fold less neurotoxic than omega-ctenitoxin-Cs1a on drosophila flies. In terms of biological role, blocks voltage-activated calcium channels (Cav). Is 190-fold less neurotoxic than omega-ctenitoxin-Cs1a on drosophila flies. The chain is Toxin CSTX-1 from Cupiennius salei (American wandering spider).